We begin with the raw amino-acid sequence, 169 residues long: MSASEEMLGGARGESTTATGPFSFSSEPTLEDIRRLHAEFAAERDWEQFHQPRNLLLALVGEVGELAELFQWKPDEEPGPQAWSPRERAALQEELSDILIYLVALAARCRVDLPQAVLCKMDTNRRRYPVHLSRGSACKYTDLPHGATSENQAMGPADPASESTGQVST.

Residues 1–26 are disordered; the sequence is MSASEEMLGGARGESTTATGPFSFSS. Residues 14 to 26 show a composition bias toward polar residues; sequence ESTTATGPFSFSS. Substrate contacts are provided by residues His-37 and 46 to 50; that span reads WEQFH. 2 residues coordinate Mg(2+): Glu-62 and Glu-65. Trp-72 contributes to the substrate binding site. Phosphoserine is present on Ser-84. Mg(2+)-binding residues include Glu-94 and Asp-97. Tyr-101 provides a ligand contact to substrate. Positions 143-169 are disordered; it reads LPHGATSENQAMGPADPASESTGQVST.

Homotetramer. The cofactor is Mg(2+).

It is found in the cytoplasm. The protein resides in the cytosol. It carries out the reaction dCTP + H2O = dCMP + diphosphate + H(+). In terms of biological role, hydrolyzes deoxynucleoside triphosphates (dNTPs) to the corresponding nucleoside monophosphates. Has a strong preference for dCTP and its analogs including 5-iodo-dCTP and 5-methyl-dCTP for which it may even have a higher efficiency. May protect DNA or RNA against the incorporation of these genotoxic nucleotide analogs through their catabolism. The protein is dCTP pyrophosphatase 1 of Bos taurus (Bovine).